The sequence spans 345 residues: Phosphoribosylformylglycinamidine cyclo-ligase (345 aa).

Belongs to the AIR synthase family.

It localises to the cytoplasm. It carries out the reaction 2-formamido-N(1)-(5-O-phospho-beta-D-ribosyl)acetamidine + ATP = 5-amino-1-(5-phospho-beta-D-ribosyl)imidazole + ADP + phosphate + H(+). It participates in purine metabolism; IMP biosynthesis via de novo pathway; 5-amino-1-(5-phospho-D-ribosyl)imidazole from N(2)-formyl-N(1)-(5-phospho-D-ribosyl)glycinamide: step 2/2. This chain is Phosphoribosylformylglycinamidine cyclo-ligase, found in Klebsiella pneumoniae (strain 342).